The primary structure comprises 364 residues: Aminomethyltransferase (364 aa).

It belongs to the GcvT family. In terms of assembly, the glycine cleavage system is composed of four proteins: P, T, L and H.

The enzyme catalyses N(6)-[(R)-S(8)-aminomethyldihydrolipoyl]-L-lysyl-[protein] + (6S)-5,6,7,8-tetrahydrofolate = N(6)-[(R)-dihydrolipoyl]-L-lysyl-[protein] + (6R)-5,10-methylene-5,6,7,8-tetrahydrofolate + NH4(+). Functionally, the glycine cleavage system catalyzes the degradation of glycine. In Thermotoga maritima (strain ATCC 43589 / DSM 3109 / JCM 10099 / NBRC 100826 / MSB8), this protein is Aminomethyltransferase.